The following is a 267-amino-acid chain: Interleukin-2 receptor subunit alpha (267 aa).

A signal peptide spans Met1–Ala21. Positions Glu22–Ser79 constitute a Sushi 1 domain. Topologically, residues Glu22 to Gln235 are extracellular. 3 disulfide bridges follow: Cys24–Cys66, Cys49–Cys75, and Cys51–Cys77. 2 N-linked (GlcNAc...) asparagine glycosylation sites follow: Asn33 and Asn43. Positions His82–Pro93 are enriched in polar residues. Residues His82–Thr108 are disordered. Low complexity predominate over residues Glu98–Thr108. The Sushi 2 domain maps to Gly118–Asp181. Cystine bridges form between Cys120–Cys163 and Cys147–Cys179. The disordered stretch occupies residues Ser191–Phe215. The segment covering Glu192 to Phe215 has biased composition (polar residues). A helical transmembrane segment spans residues Val236–Trp256. At Gln257–Ile267 the chain is on the cytoplasmic side.

Non-covalent dimer of an alpha and a beta subunit. IL2R exists in 3 different forms: a high affinity dimer, an intermediate affinity monomer (beta subunit), and a low affinity monomer (alpha subunit). The high and intermediate affinity forms also associate with a gamma subunit.

The protein localises to the membrane. Functionally, receptor for interleukin-2. The receptor is involved in the regulation of immune tolerance by controlling regulatory T cells (TREGs) activity. TREGs suppress the activation and expansion of autoreactive T-cells. In Rattus norvegicus (Rat), this protein is Interleukin-2 receptor subunit alpha (Il2ra).